A 332-amino-acid chain; its full sequence is Azadirone synthase LFS (332 aa).

Positions 181–286 constitute a Fe2OG dioxygenase domain; that stretch reads ANANYTNMFH…RYSTGTFICP (106 aa). Fe cation-binding residues include H208, D210, and H269. Position 277 (R277) interacts with 2-oxoglutarate.

The protein belongs to the iron/ascorbate-dependent oxidoreductase family. Fe(2+) serves as cofactor. Mainly expressed in petioles and, to a lower extent, in roots.

It carries out the reaction (1S,3bR,4R,5aR,9aR,9bR,11aS)-1-(1-hydroxy-4-oxobutan-2-yl)-3b,6,6,9a,11a-pentamethyl-7-oxo-1H,2H,3bH,4H,5H,5aH,6H,7H,9aH,9bH,10H,11H,11aH-cyclopenta[a]phenanthren-4-yl acetate + 2-oxoglutarate + O2 = azadirone + succinate + CO2 + 2 H2O. It functions in the pathway secondary metabolite biosynthesis; terpenoid biosynthesis. Its function is as follows. 2-oxoglutarate-Fe(II) type oxidoreductase involved in the biosynthesis of limonoids triterpene natural products such as azadirachtin, an antifeedant widely used as bioinsecticide, and possessing many medicinal applications including anti-tumoral, anti-malarial, anti-rheumatic, antibacterial, anti-inflammatory, anti-pyretic and diuretic effects. Catalyzes the formation of azadirone. The polypeptide is Azadirone synthase LFS (Melia azedarach (Chinaberry tree)).